The sequence spans 240 residues: Ubiquinone biosynthesis O-methyltransferase (240 aa).

Residues arginine 44, glycine 64, aspartate 85, and methionine 129 each coordinate S-adenosyl-L-methionine.

This sequence belongs to the methyltransferase superfamily. UbiG/COQ3 family.

The catalysed reaction is a 3-demethylubiquinol + S-adenosyl-L-methionine = a ubiquinol + S-adenosyl-L-homocysteine + H(+). It carries out the reaction a 3-(all-trans-polyprenyl)benzene-1,2-diol + S-adenosyl-L-methionine = a 2-methoxy-6-(all-trans-polyprenyl)phenol + S-adenosyl-L-homocysteine + H(+). It functions in the pathway cofactor biosynthesis; ubiquinone biosynthesis. Its function is as follows. O-methyltransferase that catalyzes the 2 O-methylation steps in the ubiquinone biosynthetic pathway. In Escherichia fergusonii (strain ATCC 35469 / DSM 13698 / CCUG 18766 / IAM 14443 / JCM 21226 / LMG 7866 / NBRC 102419 / NCTC 12128 / CDC 0568-73), this protein is Ubiquinone biosynthesis O-methyltransferase.